The primary structure comprises 217 residues: Urease accessory protein UreF (217 aa).

The protein belongs to the UreF family. In terms of assembly, ureD, UreF and UreG form a complex that acts as a GTP-hydrolysis-dependent molecular chaperone, activating the urease apoprotein by helping to assemble the nickel containing metallocenter of UreC. The UreE protein probably delivers the nickel.

The protein localises to the cytoplasm. Required for maturation of urease via the functional incorporation of the urease nickel metallocenter. The sequence is that of Urease accessory protein UreF from Ruegeria pomeroyi (strain ATCC 700808 / DSM 15171 / DSS-3) (Silicibacter pomeroyi).